The primary structure comprises 463 residues: Chromosomal replication initiator protein DnaA (463 aa).

A domain I, interacts with DnaA modulators region spans residues 1–83; that stretch reads MSTNQIILTD…LQLFQHYNNT (83 aa). The domain II stretch occupies residues 83–124; it reads TIKSVEIITKELPGTSKTVIELPTKTFADIGSSELNAENIFS. Residues 125–343 form a domain III, AAA+ region region; that stretch reads TLDVRFTFDN…GALNKVIAHS (219 aa). ATP is bound by residues Gly-171, Gly-173, Lys-174, and Thr-175. A domain IV, binds dsDNA region spans residues 344-463; it reads NFTLKEITLE…INLLMKILQN (120 aa).

This sequence belongs to the DnaA family. As to quaternary structure, oligomerizes as a right-handed, spiral filament on DNA at oriC.

It localises to the cytoplasm. Functionally, plays an essential role in the initiation and regulation of chromosomal replication. ATP-DnaA binds to the origin of replication (oriC) to initiate formation of the DNA replication initiation complex once per cell cycle. Binds the DnaA box (a 9 base pair repeat at the origin) and separates the double-stranded (ds)DNA. Forms a right-handed helical filament on oriC DNA; dsDNA binds to the exterior of the filament while single-stranded (ss)DNA is stabiized in the filament's interior. The ATP-DnaA-oriC complex binds and stabilizes one strand of the AT-rich DNA unwinding element (DUE), permitting loading of DNA polymerase. After initiation quickly degrades to an ADP-DnaA complex that is not apt for DNA replication. Binds acidic phospholipids. The chain is Chromosomal replication initiator protein DnaA from Rickettsia canadensis (strain McKiel).